The following is a 217-amino-acid chain: MLEIFDVSYTLLSEKKSEELFTLRKETFKDRLNWAVKCINGMEFDQYDDDNATYLFGVEGDQVICSSRLIETKYPNMITGTFFPYFEKIDIPEGKYIESSRFFVDKARSKTILGNSYPVSTMFFLATVNYSKSKGYDGVYTIVSHPMLTILKRSGWKISIVEQGMSEKHERVYLLFLPVDNESQDVLVRRINHNQEFVESKLREWPLSFEPMTEPVG.

This sequence belongs to the autoinducer synthase family.

The enzyme catalyses a fatty acyl-[ACP] + S-adenosyl-L-methionine = an N-acyl-L-homoserine lactone + S-methyl-5'-thioadenosine + holo-[ACP] + H(+). In terms of biological role, required for the synthesis of OHHL (N-(3-oxohexanoyl)-L-homoserine lactone), an autoinducer molecule which binds to ExpR and thus acts in virulence (soft rot disease) through the activation of genes for plant tissue macerating enzymes. The chain is Acyl-homoserine-lactone synthase (expI) from Pectobacterium parmentieri.